The sequence spans 410 residues: Gamma-glutamyl phosphate reductase (410 aa).

Belongs to the gamma-glutamyl phosphate reductase family.

It localises to the cytoplasm. The catalysed reaction is L-glutamate 5-semialdehyde + phosphate + NADP(+) = L-glutamyl 5-phosphate + NADPH + H(+). The protein operates within amino-acid biosynthesis; L-proline biosynthesis; L-glutamate 5-semialdehyde from L-glutamate: step 2/2. Catalyzes the NADPH-dependent reduction of L-glutamate 5-phosphate into L-glutamate 5-semialdehyde and phosphate. The product spontaneously undergoes cyclization to form 1-pyrroline-5-carboxylate. This chain is Gamma-glutamyl phosphate reductase, found in Sulfurimonas denitrificans (strain ATCC 33889 / DSM 1251) (Thiomicrospira denitrificans (strain ATCC 33889 / DSM 1251)).